Consider the following 375-residue polypeptide: Histidine biosynthesis bifunctional protein HisB (375 aa).

The interval Met1–Pro168 is histidinol-phosphatase. Residue Asp8 is the Nucleophile of the active site. Mg(2+) contacts are provided by Asp8, Asp10, and Asp128. The active-site Proton donor is Asp10. The tract at residues Arg169–Leu375 is imidazoleglycerol-phosphate dehydratase.

It in the N-terminal section; belongs to the histidinol-phosphatase family. This sequence in the C-terminal section; belongs to the imidazoleglycerol-phosphate dehydratase family. Mg(2+) is required as a cofactor.

Its subcellular location is the cytoplasm. It catalyses the reaction D-erythro-1-(imidazol-4-yl)glycerol 3-phosphate = 3-(imidazol-4-yl)-2-oxopropyl phosphate + H2O. It carries out the reaction L-histidinol phosphate + H2O = L-histidinol + phosphate. The protein operates within amino-acid biosynthesis; L-histidine biosynthesis; L-histidine from 5-phospho-alpha-D-ribose 1-diphosphate: step 6/9. Its pathway is amino-acid biosynthesis; L-histidine biosynthesis; L-histidine from 5-phospho-alpha-D-ribose 1-diphosphate: step 8/9. The polypeptide is Histidine biosynthesis bifunctional protein HisB (Xanthomonas oryzae pv. oryzae (strain MAFF 311018)).